The following is a 339-amino-acid chain: Methylthioribose-1-phosphate isomerase (339 aa).

Residues 52–54, Arg89, and Gln188 contribute to the substrate site; that span reads RGA. Asp229 acts as the Proton donor in catalysis. 239 to 240 provides a ligand contact to substrate; the sequence is NK.

Belongs to the eIF-2B alpha/beta/delta subunits family. MtnA subfamily.

The enzyme catalyses 5-(methylsulfanyl)-alpha-D-ribose 1-phosphate = 5-(methylsulfanyl)-D-ribulose 1-phosphate. It functions in the pathway amino-acid biosynthesis; L-methionine biosynthesis via salvage pathway; L-methionine from S-methyl-5-thio-alpha-D-ribose 1-phosphate: step 1/6. In terms of biological role, catalyzes the interconversion of methylthioribose-1-phosphate (MTR-1-P) into methylthioribulose-1-phosphate (MTRu-1-P). In Anaeromyxobacter dehalogenans (strain 2CP-C), this protein is Methylthioribose-1-phosphate isomerase.